We begin with the raw amino-acid sequence, 192 residues long: uncharacterized protein (192 aa).

An N-terminal signal peptide occupies residues 1–18; that stretch reads MNSKFILKYFILAFFLVS. The N-palmitoyl cysteine moiety is linked to residue C19. A lipid anchor (S-diacylglycerol cysteine) is attached at C19.

The protein resides in the cell membrane. This is an uncharacterized protein from Borreliella burgdorferi (strain ATCC 35210 / DSM 4680 / CIP 102532 / B31) (Borrelia burgdorferi).